Here is a 565-residue protein sequence, read N- to C-terminus: Transcription factor asqA (565 aa).

The interval 204 to 273 is fungal transcription factor domain; that stretch reads MDTAMAQAVR…HSMPALCIDS (70 aa).

It is found in the nucleus. Transcription factor that regulates specifically the 4'-methoxyviridicatin/aspoquinolone biosynthesis cluster. This Emericella nidulans (strain FGSC A4 / ATCC 38163 / CBS 112.46 / NRRL 194 / M139) (Aspergillus nidulans) protein is Transcription factor asqA.